We begin with the raw amino-acid sequence, 57 residues long: Small ribosomal subunit protein bS21B (57 aa).

A disordered region spans residues 37–57 (RYEKPSARRKRKAEAARKRRR). Residues 43-57 (ARRKRKAEAARKRRR) are compositionally biased toward basic residues.

This sequence belongs to the bacterial ribosomal protein bS21 family.

This chain is Small ribosomal subunit protein bS21B, found in Gloeobacter violaceus (strain ATCC 29082 / PCC 7421).